Consider the following 379-residue polypeptide: Spermatogenesis-associated protein 17 (379 aa).

3 consecutive IQ domains span residues 48-77, 71-100, and 107-136; these read ENDA…VVTI, LNRV…AAYY, and YNEM…LKEY.

Strongly expressed in adult testis but weakly expressed in the spleen and thymus. Strongly expressed in round and elongating spermatids, and weakly or not expressed in spermatozoa.

The protein localises to the cytoplasm. This is Spermatogenesis-associated protein 17 (Spata17) from Mus musculus (Mouse).